A 76-amino-acid polypeptide reads, in one-letter code: MTYKATILAIFMIILVLGIGTKETRGQETCHDLIMKRDCDEATCVNMCQQKWKGSGGSCFQNFNVMSCICNFPCQV.

A signal peptide spans 1–26 (MTYKATILAIFMIILVLGIGTKETRG). 4 disulfides stabilise this stretch: C30/C74, C39/C59, C44/C68, and C48/C70.

Belongs to the DEFL family.

Its subcellular location is the secreted. This chain is Putative defensin-like protein 121 (LCR55), found in Arabidopsis thaliana (Mouse-ear cress).